The sequence spans 303 residues: UDP-3-O-acyl-N-acetylglucosamine deacetylase (303 aa).

Positions 79, 238, and 242 each coordinate Zn(2+). His265 serves as the catalytic Proton donor.

This sequence belongs to the LpxC family. Requires Zn(2+) as cofactor.

The catalysed reaction is a UDP-3-O-[(3R)-3-hydroxyacyl]-N-acetyl-alpha-D-glucosamine + H2O = a UDP-3-O-[(3R)-3-hydroxyacyl]-alpha-D-glucosamine + acetate. Its pathway is glycolipid biosynthesis; lipid IV(A) biosynthesis; lipid IV(A) from (3R)-3-hydroxytetradecanoyl-[acyl-carrier-protein] and UDP-N-acetyl-alpha-D-glucosamine: step 2/6. Its function is as follows. Catalyzes the hydrolysis of UDP-3-O-myristoyl-N-acetylglucosamine to form UDP-3-O-myristoylglucosamine and acetate, the committed step in lipid A biosynthesis. This Pseudoalteromonas translucida (strain TAC 125) protein is UDP-3-O-acyl-N-acetylglucosamine deacetylase.